Here is a 173-residue protein sequence, read N- to C-terminus: Pathogenesis-related protein 1C (173 aa).

Residues 1-20 (MSTSAVLFLLLAVFAAGASA) form the signal peptide.

It belongs to the thaumatin family.

The protein is Pathogenesis-related protein 1C of Hordeum vulgare (Barley).